A 398-amino-acid chain; its full sequence is Elongation factor Tu (398 aa).

Residues 10–207 enclose the tr-type G domain; sequence KPHVNIGTIG…TVDDYIPDPE (198 aa). The G1 stretch occupies residues 19–26; sequence GHVDHGKT. 19–26 is a binding site for GTP; the sequence is GHVDHGKT. Mg(2+) is bound at residue threonine 26. The interval 63–67 is G2; the sequence is GITIN. Positions 84–87 are G3; the sequence is DAPG. GTP contacts are provided by residues 84–88 and 139–142; these read DAPGH and NKVD. The segment at 139–142 is G4; that stretch reads NKVD. Positions 177 to 179 are G5; it reads SAL.

The protein belongs to the TRAFAC class translation factor GTPase superfamily. Classic translation factor GTPase family. EF-Tu/EF-1A subfamily. In terms of assembly, monomer.

It is found in the cytoplasm. The catalysed reaction is GTP + H2O = GDP + phosphate + H(+). Functionally, GTP hydrolase that promotes the GTP-dependent binding of aminoacyl-tRNA to the A-site of ribosomes during protein biosynthesis. The protein is Elongation factor Tu of Streptococcus mutans serotype c (strain ATCC 700610 / UA159).